The sequence spans 254 residues: DNA repair protein RecO (254 aa).

Belongs to the RecO family.

In terms of biological role, involved in DNA repair and RecF pathway recombination. This Verminephrobacter eiseniae (strain EF01-2) protein is DNA repair protein RecO.